The sequence spans 115 residues: Insulin-like peptide IlO1_i1 (115 aa).

An N-terminal signal peptide occupies residues M1–G20. Cystine bridges form between C40-C101, C52-C114, and C100-C105. A propeptide spans R59 to R93 (c peptide).

Belongs to the insulin family. Expressed in tentacles.

It is found in the secreted. Functionally, heterodimer with unknown function. Surprisingly, the truncated synthetic analog (dimer of 27-58 and 94-115) does not bind to long insulin receptor (HIR-B) and insulin-like growth factor 1 receptor. This truncated synthetic analog shows very weak inhibitory activity on different voltage-gated channels. This chain is Insulin-like peptide IlO1_i1, found in Oulactis sp. (Sea anemone).